The following is a 302-amino-acid chain: 4-hydroxy-tetrahydrodipicolinate synthase (302 aa).

T55 serves as a coordination point for pyruvate. Y144 serves as the catalytic Proton donor/acceptor. K172 (schiff-base intermediate with substrate) is an active-site residue. Pyruvate is bound at residue V214.

Belongs to the DapA family. Homotetramer; dimer of dimers.

It is found in the cytoplasm. The catalysed reaction is L-aspartate 4-semialdehyde + pyruvate = (2S,4S)-4-hydroxy-2,3,4,5-tetrahydrodipicolinate + H2O + H(+). It functions in the pathway amino-acid biosynthesis; L-lysine biosynthesis via DAP pathway; (S)-tetrahydrodipicolinate from L-aspartate: step 3/4. In terms of biological role, catalyzes the condensation of (S)-aspartate-beta-semialdehyde [(S)-ASA] and pyruvate to 4-hydroxy-tetrahydrodipicolinate (HTPA). The chain is 4-hydroxy-tetrahydrodipicolinate synthase from Prochlorococcus marinus (strain MIT 9303).